Reading from the N-terminus, the 324-residue chain is 26S proteasome non-ATPase regulatory subunit 7 (324 aa).

Residues 9-144 (VVVHPLVLLS…TEAYISVEEV (136 aa)) enclose the MPN domain. A Glycyl lysine isopeptide (Lys-Gly) (interchain with G-Cter in ubiquitin) cross-link involves residue Lys180. N6-acetyllysine occurs at positions 204, 214, 316, and 317. The segment at 281–324 (ANRDAEKKEGQEKEESKKDRKEDKEKDKDKEKSDVKKEEKKEKK) is disordered.

Belongs to the peptidase M67A family. In terms of assembly, component of the 19S proteasome regulatory particle complex. The 26S proteasome consists of a 20S core particle (CP) and two 19S regulatory subunits (RP). The regulatory particle is made of a lid composed of 9 subunits including PSMD7, a base containing 6 ATPases and few additional components. Within the complex, PSMD7 interacts with subunit PSMD4 through their respective MPN domain. Interacts with TRIM5.

Functionally, component of the 26S proteasome, a multiprotein complex involved in the ATP-dependent degradation of ubiquitinated proteins. This complex plays a key role in the maintenance of protein homeostasis by removing misfolded or damaged proteins, which could impair cellular functions, and by removing proteins whose functions are no longer required. Therefore, the proteasome participates in numerous cellular processes, including cell cycle progression, apoptosis, or DNA damage repair. The protein is 26S proteasome non-ATPase regulatory subunit 7 (PSMD7) of Homo sapiens (Human).